The primary structure comprises 71 residues: U-scoloptoxin(21)-Sm1a (71 aa).

A signal peptide spans 1 to 21 (MKSVIFALFLVYLLIVRAAEA). Residues 45–71 (IELANDPNGPGRRRRAPAENEDFLKHS) form a disordered region. Over residues 60–71 (APAENEDFLKHS) the composition is skewed to basic and acidic residues.

It belongs to the scoloptoxin-21 family. In terms of tissue distribution, expressed by the venom gland.

The protein resides in the secreted. This is U-scoloptoxin(21)-Sm1a from Scolopendra morsitans (Tanzanian blue ringleg centipede).